We begin with the raw amino-acid sequence, 212 residues long: Ropporin-1 (212 aa).

Residues 12–43 (PELPELLKQFTKAAIRSQPQDLIQWAAEYFGA) form the RIIa domain. At serine 56 the chain carries Phosphoserine. The interval 209 to 212 (VRLE) is interaction with RHPN1.

Belongs to the ropporin family. In terms of assembly, homodimer. Interacts with AKAP3. May interact with SPA17. Interacts with RHPN1. Interacts with FSCB; the interaction increases upon spermatozoa capacitation conditions. Interacts with CFAP61. In terms of processing, sumoylated, sumoylation decreases upon spermatozoa capacitation conditions.

The protein localises to the cell projection. Its subcellular location is the cilium. The protein resides in the flagellum. In terms of biological role, important for male fertility. With ROPN1L, involved in fibrous sheath integrity and sperm motility, plays a role in PKA-dependent signaling processes required for spermatozoa capacitation. The chain is Ropporin-1 (ROPN1) from Bos taurus (Bovine).